Reading from the N-terminus, the 408-residue chain is Multifunctional CCA protein (408 aa).

Positions 8 and 11 each coordinate ATP. CTP-binding residues include Gly8 and Arg11. The Mg(2+) site is built by Asp21 and Asp23. ATP contacts are provided by Arg91, Arg137, and Arg140. The CTP site is built by Arg91, Arg137, and Arg140. Positions 228–329 (TGVHVLSVLE…LELLQSFDVY (102 aa)) constitute an HD domain.

It belongs to the tRNA nucleotidyltransferase/poly(A) polymerase family. Bacterial CCA-adding enzyme type 1 subfamily. In terms of assembly, monomer. Can also form homodimers and oligomers. It depends on Mg(2+) as a cofactor. Ni(2+) serves as cofactor.

It carries out the reaction a tRNA precursor + 2 CTP + ATP = a tRNA with a 3' CCA end + 3 diphosphate. The catalysed reaction is a tRNA with a 3' CCA end + 2 CTP + ATP = a tRNA with a 3' CCACCA end + 3 diphosphate. Its function is as follows. Catalyzes the addition and repair of the essential 3'-terminal CCA sequence in tRNAs without using a nucleic acid template. Adds these three nucleotides in the order of C, C, and A to the tRNA nucleotide-73, using CTP and ATP as substrates and producing inorganic pyrophosphate. tRNA 3'-terminal CCA addition is required both for tRNA processing and repair. Also involved in tRNA surveillance by mediating tandem CCA addition to generate a CCACCA at the 3' terminus of unstable tRNAs. While stable tRNAs receive only 3'-terminal CCA, unstable tRNAs are marked with CCACCA and rapidly degraded. The sequence is that of Multifunctional CCA protein from Pseudomonas syringae pv. syringae (strain B728a).